Here is a 292-residue protein sequence, read N- to C-terminus: uncharacterized protein (292 aa).

Residues 17–37 (SMDMFFFLFIFLLFIYPEMMM) form a helical membrane-spanning segment.

The protein to M.jannaschii MJ0137.

The protein resides in the membrane. This is an uncharacterized protein from Methanocaldococcus jannaschii (strain ATCC 43067 / DSM 2661 / JAL-1 / JCM 10045 / NBRC 100440) (Methanococcus jannaschii).